Consider the following 163-residue polypeptide: NADH-quinone oxidoreductase subunit I (163 aa).

2 4Fe-4S ferredoxin-type domains span residues 55–84 and 94–123; these read RRYP…IEAE and TRYD…EGPN. 8 residues coordinate [4Fe-4S] cluster: cysteine 64, cysteine 67, cysteine 70, cysteine 74, cysteine 103, cysteine 106, cysteine 109, and cysteine 113.

This sequence belongs to the complex I 23 kDa subunit family. In terms of assembly, NDH-1 is composed of 14 different subunits. Subunits NuoA, H, J, K, L, M, N constitute the membrane sector of the complex. Requires [4Fe-4S] cluster as cofactor.

The protein resides in the cell inner membrane. The catalysed reaction is a quinone + NADH + 5 H(+)(in) = a quinol + NAD(+) + 4 H(+)(out). Functionally, NDH-1 shuttles electrons from NADH, via FMN and iron-sulfur (Fe-S) centers, to quinones in the respiratory chain. The immediate electron acceptor for the enzyme in this species is believed to be ubiquinone. Couples the redox reaction to proton translocation (for every two electrons transferred, four hydrogen ions are translocated across the cytoplasmic membrane), and thus conserves the redox energy in a proton gradient. This chain is NADH-quinone oxidoreductase subunit I, found in Caulobacter vibrioides (strain ATCC 19089 / CIP 103742 / CB 15) (Caulobacter crescentus).